We begin with the raw amino-acid sequence, 419 residues long: Transcription factor 7 (419 aa).

Residues 1 to 12 (MPQLDSGGGGAG) show a composition bias toward gly residues. The segment at 1-60 (MPQLDSGGGGAGRGDDLGAPDELLAFQDEGEEQDDKNRDSPVGPERDLAELKSSLVNESE) is CTNNB1-binding. 2 disordered regions span residues 1–111 (MPQL…LKAP) and 134–200 (PASG…SGFY). Composition is skewed to basic and acidic residues over residues 35 to 50 (DKNRDSPVGPERDLAE) and 86 to 109 (LGREHTSQRLFPDKLPESLEDGLK). Pro residues predominate over residues 143–158 (QPQPPLHNKPGQPPHG). Positions 304 to 372 (IKKPLNAFML…LHMQLYPGWS (69 aa)) form a DNA-binding region, HMG box. A disordered region spans residues 374–406 (RDNYGKKKRRSREKHQESTTGGKRNAFGTYPEK). The Nuclear localization signal motif lies at 379 to 385 (KKKRRSR).

This sequence belongs to the TCF/LEF family. Binds the armadillo repeat of CTNNB1 and forms a stable complex. Binds TLE5, TLE1, TLE2, TLE3 and TLE4. Interacts with MLLT11. Interacts with DAZAP2. In terms of assembly, interacts (via N-terminus) with SOX13; inhibits WNT-mediated transcriptional activity. As to expression, T-cell specific. Expressed in triple negative 2 subpopulations of T-cells and both the gamma-delta and alpha-beta T-cell lineages. Expressed in Il7 receptor positive innate-like T-cells in the mesenteric lymph nodes and spleen (at protein level).

The protein resides in the nucleus. In terms of biological role, transcriptional activator involved in T-cell lymphocyte differentiation. Necessary for the survival of CD4(+) CD8(+) immature thymocytes. Isoforms lacking the N-terminal CTNNB1 binding domain cannot fulfill this role. Binds to the T-lymphocyte-specific enhancer element (5'-WWCAAAG-3') found in the promoter of the CD3E gene. Represses expression of the T-cell receptor gamma gene in alpha-beta T-cell lineages. Inhibits the developmental program of IL17A effector gamma-delta T-cell subsets via regulating the transcription of T-cell lineage effector proteins. Required for the development of natural killer receptor-positive lymphoid tissue inducer T-cells. TLE1, TLE2, TLE3 and TLE4 repress transactivation mediated by TCF7 and CTNNB1. May also act as feedback transcriptional repressor of CTNNB1 and TCF7L2 target genes. The sequence is that of Transcription factor 7 from Mus musculus (Mouse).